A 152-amino-acid polypeptide reads, in one-letter code: Transcriptional regulator MraZ (152 aa).

2 consecutive SpoVT-AbrB domains span residues 5–52 (ANAV…PLPE) and 81–124 (AVDL…NEDA).

It belongs to the MraZ family. In terms of assembly, forms oligomers.

It is found in the cytoplasm. The protein resides in the nucleoid. The polypeptide is Transcriptional regulator MraZ (Azotobacter vinelandii (strain DJ / ATCC BAA-1303)).